The primary structure comprises 74 residues: Small ribosomal subunit protein eS17 (74 aa).

The protein belongs to the eukaryotic ribosomal protein eS17 family.

The protein is Small ribosomal subunit protein eS17 of Aeropyrum pernix (strain ATCC 700893 / DSM 11879 / JCM 9820 / NBRC 100138 / K1).